A 993-amino-acid polypeptide reads, in one-letter code: Vacuolar membrane protease (993 aa).

The Cytoplasmic segment spans residues 1–24 (MSPAMANPRVRKFNPIAFTPLPVT). Residues 25-45 (LITTIVYLAVLILVLVTYLVV) traverse the membrane as a helical segment. Residues 46–391 (PPAPTLEMSP…SAFAVFRLHT (346 aa)) are Vacuolar-facing. N59, N116, and N119 each carry an N-linked (GlcNAc...) asparagine glycan. Zn(2+)-binding residues include H175 and D187. E221 serves as the catalytic Proton acceptor. E222 serves as a coordination point for Zn(2+). The N-linked (GlcNAc...) asparagine glycan is linked to N238. Residues E247 and H320 each coordinate Zn(2+). A helical membrane pass occupies residues 392 to 412 (LFALSVTLLVSAPLVLFITSI). Over 413–447 (ALSKTDRMYLFSMSKSLGGTSETVSLRGLRGLFRT) the chain is Cytoplasmic. A helical transmembrane segment spans residues 448 to 468 (PIILTVTTVITIGLAYLLEKI). Residues 469 to 475 (NPYIVHS) lie on the Vacuolar side of the membrane. The chain crosses the membrane as a helical span at residues 476 to 496 (SQFAVWSMMLSVWIFVAWFLA). At 497–509 (RVADFFRPSALHR) the chain is on the cytoplasmic side. The chain crosses the membrane as a helical span at residues 510–530 (AYSYTWIFIATWIMLVISTVY). At 531-534 (ANQK) the chain is on the vacuolar side. The chain crosses the membrane as a helical span at residues 535 to 555 (GIAAGYFIFFYFAAVFLATWV). Over 556 to 672 (SYLELFSLPR…WSWTLPRWTW (117 aa)) the chain is Cytoplasmic. The segment at 579-621 (RRSSSLSSRLLTPSADELPSDIGPNGAENLGDPDETDPTESTS) is disordered. Residues 673–693 (ILQLLLLAPIVIILVGQVGLL) form a helical membrane-spanning segment. Over 694 to 709 (LTTAMSQIGSDGVSTF) the chain is Vacuolar. The helical transmembrane segment at 710 to 730 (IVYLACALLSTLLFAPLFPFI) threads the bilayer. At 731–737 (HRFTYHV) the chain is on the cytoplasmic side. The helical transmembrane segment at 738-758 (PTFLLLIFIGTLIYNLVAFPF) threads the bilayer. Residues 759–993 (SPANRLKIFF…VEASHDFIIQ (235 aa)) are Vacuolar-facing. Residues N806, N847, and N955 are each glycosylated (N-linked (GlcNAc...) asparagine).

Belongs to the peptidase M28 family. Zn(2+) serves as cofactor.

The protein localises to the vacuole membrane. May be involved in vacuolar sorting and osmoregulation. The sequence is that of Vacuolar membrane protease from Paracoccidioides lutzii (strain ATCC MYA-826 / Pb01) (Paracoccidioides brasiliensis).